Reading from the N-terminus, the 435-residue chain is ATP-dependent protease ATPase subunit HslU (435 aa).

ATP contacts are provided by residues isoleucine 18, 60–65, aspartate 248, glutamate 313, and arginine 385; that span reads GVGKTE.

Belongs to the ClpX chaperone family. HslU subfamily. As to quaternary structure, a double ring-shaped homohexamer of HslV is capped on each side by a ring-shaped HslU homohexamer. The assembly of the HslU/HslV complex is dependent on binding of ATP.

Its subcellular location is the cytoplasm. In terms of biological role, ATPase subunit of a proteasome-like degradation complex; this subunit has chaperone activity. The binding of ATP and its subsequent hydrolysis by HslU are essential for unfolding of protein substrates subsequently hydrolyzed by HslV. HslU recognizes the N-terminal part of its protein substrates and unfolds these before they are guided to HslV for hydrolysis. This Agrobacterium fabrum (strain C58 / ATCC 33970) (Agrobacterium tumefaciens (strain C58)) protein is ATP-dependent protease ATPase subunit HslU.